The primary structure comprises 416 residues: L-threonine dehydratase biosynthetic IlvA (416 aa).

Lys-51 bears the N6-(pyridoxal phosphate)lysine mark. Pyridoxal 5'-phosphate is bound by residues Asn-78, 184 to 188 (GGGGL), and Ser-309. The region spanning 333–407 (HYFVINFPQR…FDNRYVNLHG (75 aa)) is the ACT-like domain.

This sequence belongs to the serine/threonine dehydratase family. As to quaternary structure, homotetramer. It depends on pyridoxal 5'-phosphate as a cofactor.

The enzyme catalyses L-threonine = 2-oxobutanoate + NH4(+). Its pathway is amino-acid biosynthesis; L-isoleucine biosynthesis; 2-oxobutanoate from L-threonine: step 1/1. In terms of biological role, catalyzes the anaerobic formation of alpha-ketobutyrate and ammonia from threonine in a two-step reaction. The first step involved a dehydration of threonine and a production of enamine intermediates (aminocrotonate), which tautomerizes to its imine form (iminobutyrate). Both intermediates are unstable and short-lived. The second step is the nonenzymatic hydrolysis of the enamine/imine intermediates to form 2-ketobutyrate and free ammonia. In the low water environment of the cell, the second step is accelerated by RidA. The sequence is that of L-threonine dehydratase biosynthetic IlvA (ilvA) from Lactococcus lactis subsp. lactis (strain IL1403) (Streptococcus lactis).